Consider the following 331-residue polypeptide: Protoheme IX farnesyltransferase (331 aa).

Helical transmembrane passes span 63–83 (LACTLGGGALAAAAAGALNCL), 109–129 (SVFIGAVACTLVSSALLVSGV), 132–152 (LAAGLTLLGLCSYVLLYTAFL), 160–180 (IVFGGVAGAIPPLVGASAAAG), 188–208 (WLFSLVMVWTPAHFWALAILL), 215–235 (VGIPMLPTVSGPFVTAKAISV), 241–261 (VFLSFLGCFVLPEGGLLYGIL), and 294–314 (ILYMFGVCFLLVISRLQVSIV).

This sequence belongs to the UbiA prenyltransferase family. Protoheme IX farnesyltransferase subfamily.

It is found in the cell inner membrane. The catalysed reaction is heme b + (2E,6E)-farnesyl diphosphate + H2O = Fe(II)-heme o + diphosphate. The protein operates within porphyrin-containing compound metabolism; heme O biosynthesis; heme O from protoheme: step 1/1. Its function is as follows. Converts heme B (protoheme IX) to heme O by substitution of the vinyl group on carbon 2 of heme B porphyrin ring with a hydroxyethyl farnesyl side group. The polypeptide is Protoheme IX farnesyltransferase (Prochlorococcus marinus (strain NATL2A)).